A 516-amino-acid polypeptide reads, in one-letter code: MHGRKDDAQKQPVKNQLGLNPQSHLPELQLFQAEGKIYKYDHMEKSVNSSSLVSPPQRISSTVKTHISHTYECNFVDSLFTQKEKANIGTEHYKCSERGKAFHQGLHFTIHQIIHTKETQFKCDICGKIFNKKSNLASHQRIHTGEKPYKCNECGKVFHNMSHLAQHRRIHTGEKPYKCNECGKVFNQISHLAQHQRIHTGEKPYKCNECGKVFHQISHLAQHRTIHTGEKPYECNKCGKVFSRNSYLVQHLIIHTGEKPYRCNVCGKVFHHISHLAQHQRIHTGEKPYKCNECGKVFSHKSSLVNHWRIHTGEKPYKCNECGKVFSHKSSLVNHWRIHTGEKPYKCNECGKVFSRNSYLAQHLIIHAGEKPYKCDECDKAFSQNSHLVQHHRIHTGEKPYKCDECGKVFSQNSYLAYHWRIHTGEKAYKCNECGKVFGLNSSLAHHRKIHTGEKPFKCNECGKAFSMRSSLTNHHAIHTGEKHFKCNECGKLFRDNSYLVRHQRFHAGKKSNTCN.

Positions methionine 1–asparagine 20 are disordered. The C2H2-type 1; degenerate zinc-finger motif lies at tyrosine 93–histidine 115. C2H2-type zinc fingers lie at residues phenylalanine 121 to histidine 143, tyrosine 149 to histidine 171, tyrosine 177 to histidine 199, tyrosine 205 to histidine 227, tyrosine 233 to histidine 255, tyrosine 261 to histidine 283, tyrosine 289 to histidine 311, tyrosine 317 to histidine 339, tyrosine 345 to histidine 367, tyrosine 373 to histidine 395, tyrosine 401 to histidine 423, tyrosine 429 to histidine 451, phenylalanine 457 to histidine 479, and phenylalanine 485 to histidine 507.

The protein belongs to the krueppel C2H2-type zinc-finger protein family.

The protein resides in the nucleus. Its function is as follows. May be involved in transcriptional regulation. The sequence is that of Zinc finger protein 83 (ZNF83) from Homo sapiens (Human).